Reading from the N-terminus, the 363-residue chain is Phospho-N-acetylmuramoyl-pentapeptide-transferase (363 aa).

Helical transmembrane passes span glutamine 3 to isoleucine 23, glycine 48 to alanine 68, proline 83 to leucine 103, alanine 121 to alanine 141, phenylalanine 159 to methionine 179, leucine 192 to phenylalanine 212, proline 234 to tryptophan 254, isoleucine 261 to cysteine 281, leucine 286 to valine 306, and phenylalanine 340 to alanine 360.

Belongs to the glycosyltransferase 4 family. MraY subfamily. Mg(2+) serves as cofactor.

Its subcellular location is the cell membrane. It carries out the reaction UDP-N-acetyl-alpha-D-muramoyl-L-alanyl-gamma-D-glutamyl-meso-2,6-diaminopimeloyl-D-alanyl-D-alanine + di-trans,octa-cis-undecaprenyl phosphate = di-trans,octa-cis-undecaprenyl diphospho-N-acetyl-alpha-D-muramoyl-L-alanyl-D-glutamyl-meso-2,6-diaminopimeloyl-D-alanyl-D-alanine + UMP. The protein operates within cell wall biogenesis; peptidoglycan biosynthesis. Catalyzes the initial step of the lipid cycle reactions in the biosynthesis of the cell wall peptidoglycan: transfers peptidoglycan precursor phospho-MurNAc-pentapeptide from UDP-MurNAc-pentapeptide onto the lipid carrier undecaprenyl phosphate, yielding undecaprenyl-pyrophosphoryl-MurNAc-pentapeptide, known as lipid I. This chain is Phospho-N-acetylmuramoyl-pentapeptide-transferase, found in Streptomyces coelicolor (strain ATCC BAA-471 / A3(2) / M145).